A 429-amino-acid polypeptide reads, in one-letter code: Glutamate-1-semialdehyde 2,1-aminomutase 2 (429 aa).

At Lys-268 the chain carries N6-(pyridoxal phosphate)lysine.

Belongs to the class-III pyridoxal-phosphate-dependent aminotransferase family. HemL subfamily. Homodimer. The cofactor is pyridoxal 5'-phosphate.

The protein localises to the cytoplasm. The catalysed reaction is (S)-4-amino-5-oxopentanoate = 5-aminolevulinate. It participates in porphyrin-containing compound metabolism; protoporphyrin-IX biosynthesis; 5-aminolevulinate from L-glutamyl-tRNA(Glu): step 2/2. In Bacillus cereus (strain AH820), this protein is Glutamate-1-semialdehyde 2,1-aminomutase 2.